The primary structure comprises 182 residues: IQ domain-containing protein F1 (182 aa).

Basic and acidic residues-rich tracts occupy residues 1–10 (MGEEQQKPEE) and 31–43 (ETEK…KQEL). The interval 1-43 (MGEEQQKPEELNAPTDDAPQEKQQPADLSSETEKAKSKKKQEL) is disordered. IQ domains follow at residues 45-74 (EKDQ…SAWI) and 101-130 (EQWA…AVRT).

Interacts with calmodulin. In terms of tissue distribution, specifically expressed in testes and mature spermatozoa (at protein level).

Its subcellular location is the cytoplasmic vesicle. It localises to the secretory vesicle. It is found in the acrosome. Involved in sperm capacitation and acrosome reaction. The chain is IQ domain-containing protein F1 from Mus musculus (Mouse).